Reading from the N-terminus, the 319-residue chain is Thioredoxin reductase (319 aa).

FAD is bound by residues 11-14, 40-41, Gln-45, Asn-54, Cys-145, Asp-288, and 295-297; these read SGPA, IA, and RQA. A disulfide bond links Cys-142 and Cys-145.

Belongs to the class-II pyridine nucleotide-disulfide oxidoreductase family. Homodimer. It depends on FAD as a cofactor.

The protein resides in the cytoplasm. The catalysed reaction is [thioredoxin]-dithiol + NADP(+) = [thioredoxin]-disulfide + NADPH + H(+). In Candida glabrata (strain ATCC 2001 / BCRC 20586 / JCM 3761 / NBRC 0622 / NRRL Y-65 / CBS 138) (Yeast), this protein is Thioredoxin reductase (TRR1).